The primary structure comprises 765 residues: Phosphoribosylformylglycinamidine synthase subunit PurL (765 aa).

Histidine 41 is a catalytic residue. Residues tyrosine 44 and lysine 83 each contribute to the ATP site. Glutamate 85 provides a ligand contact to Mg(2+). Residues 86 to 89 (SHNH) and arginine 108 each bind substrate. The active-site Proton acceptor is the histidine 87. Aspartate 109 provides a ligand contact to Mg(2+). Glutamine 232 contributes to the substrate binding site. Residue aspartate 260 coordinates Mg(2+). A substrate-binding site is contributed by 304–306 (ESQ). Positions 503 and 540 each coordinate ATP. Asparagine 541 serves as a coordination point for Mg(2+). Serine 543 provides a ligand contact to substrate.

Belongs to the FGAMS family. As to quaternary structure, monomer. Part of the FGAM synthase complex composed of 1 PurL, 1 PurQ and 2 PurS subunits.

Its subcellular location is the cytoplasm. It carries out the reaction N(2)-formyl-N(1)-(5-phospho-beta-D-ribosyl)glycinamide + L-glutamine + ATP + H2O = 2-formamido-N(1)-(5-O-phospho-beta-D-ribosyl)acetamidine + L-glutamate + ADP + phosphate + H(+). It participates in purine metabolism; IMP biosynthesis via de novo pathway; 5-amino-1-(5-phospho-D-ribosyl)imidazole from N(2)-formyl-N(1)-(5-phospho-D-ribosyl)glycinamide: step 1/2. Its function is as follows. Part of the phosphoribosylformylglycinamidine synthase complex involved in the purines biosynthetic pathway. Catalyzes the ATP-dependent conversion of formylglycinamide ribonucleotide (FGAR) and glutamine to yield formylglycinamidine ribonucleotide (FGAM) and glutamate. The FGAM synthase complex is composed of three subunits. PurQ produces an ammonia molecule by converting glutamine to glutamate. PurL transfers the ammonia molecule to FGAR to form FGAM in an ATP-dependent manner. PurS interacts with PurQ and PurL and is thought to assist in the transfer of the ammonia molecule from PurQ to PurL. In Synechococcus sp. (strain WH7803), this protein is Phosphoribosylformylglycinamidine synthase subunit PurL.